We begin with the raw amino-acid sequence, 146 residues long: Phospho-2-dehydro-3-deoxyheptonate aldolase (146 aa).

This sequence belongs to the class-II DAHP synthase family. In terms of assembly, homodimer.

The enzyme catalyses D-erythrose 4-phosphate + phosphoenolpyruvate + H2O = 7-phospho-2-dehydro-3-deoxy-D-arabino-heptonate + phosphate. It functions in the pathway metabolic intermediate biosynthesis; chorismate biosynthesis; chorismate from D-erythrose 4-phosphate and phosphoenolpyruvate: step 1/7. This chain is Phospho-2-dehydro-3-deoxyheptonate aldolase, found in Streptomyces lividans.